Here is a 404-residue protein sequence, read N- to C-terminus: S-adenosylmethionine synthase (404 aa).

The span at M1–V13 shows a compositional bias: polar residues. The disordered stretch occupies residues M1–K20. H17 contacts ATP. D19 is a Mg(2+) binding site. K(+) is bound at residue E45. Residues E58 and Q101 each contribute to the L-methionine site. The segment at Q101–R111 is flexible loop. Residues D172–K174, R246–F247, D255, R261–K262, A278, and K282 contribute to the ATP site. D255 provides a ligand contact to L-methionine. K286 is an L-methionine binding site.

This sequence belongs to the AdoMet synthase family. In terms of assembly, homotetramer; dimer of dimers. Mg(2+) is required as a cofactor. K(+) serves as cofactor.

The protein resides in the cytoplasm. The catalysed reaction is L-methionine + ATP + H2O = S-adenosyl-L-methionine + phosphate + diphosphate. It participates in amino-acid biosynthesis; S-adenosyl-L-methionine biosynthesis; S-adenosyl-L-methionine from L-methionine: step 1/1. Its function is as follows. Catalyzes the formation of S-adenosylmethionine (AdoMet) from methionine and ATP. The overall synthetic reaction is composed of two sequential steps, AdoMet formation and the subsequent tripolyphosphate hydrolysis which occurs prior to release of AdoMet from the enzyme. This chain is S-adenosylmethionine synthase, found in Chlorobaculum parvum (strain DSM 263 / NCIMB 8327) (Chlorobium vibrioforme subsp. thiosulfatophilum).